The following is a 595-amino-acid chain: Tripeptidyl-peptidase SED3 (595 aa).

Residues 1-22 (MLLPWQQTIIILFLGVNSLVAA) form the signal peptide. A propeptide spans 23-201 (LRNTYRTVEE…KLETIQLSSN (179 aa)) (removed in mature form). Residues N207, N264, and N278 are each glycosylated (N-linked (GlcNAc...) asparagine). The Peptidase S53 domain occupies 209–595 (TITPQCLRDI…EILAKIVRDL (387 aa)). Residues E285 and D289 each act as charge relay system in the active site. 2 N-linked (GlcNAc...) asparagine glycosylation sites follow: N298 and N365. The active-site Charge relay system is S499. Ca(2+) contacts are provided by D541 and I542. 3 N-linked (GlcNAc...) asparagine glycosylation sites follow: N554, N557, and N569. Ca(2+)-binding residues include G573 and D575.

The cofactor is Ca(2+).

It is found in the secreted. The protein localises to the extracellular space. The catalysed reaction is Release of an N-terminal tripeptide from a polypeptide.. Its function is as follows. Secreted tripeptidyl-peptidase which degrades proteins at acidic pHs and is involved in virulence. The chain is Tripeptidyl-peptidase SED3 (SED3) from Arthroderma otae (strain ATCC MYA-4605 / CBS 113480) (Microsporum canis).